A 236-amino-acid chain; its full sequence is Glycosylphosphatidylinositol anchor biosynthesis protein 11 (236 aa).

Transmembrane regions (helical) follow at residues 40-60 (TLTI…FGLT) and 65-85 (GVML…GYLI). A glycan (N-linked (GlcNAc...) asparagine) is linked at N99. The next 4 helical transmembrane spans lie at 107-127 (LLAG…VALI), 139-159 (ETYL…LVLY), 184-204 (ILLS…PIPL), and 215-235 (ITLL…CFLF).

It belongs to the PIGF family.

The protein localises to the endoplasmic reticulum membrane. It participates in glycolipid biosynthesis; glycosylphosphatidylinositol-anchor biosynthesis. In terms of biological role, acts in the GPI biosynthetic pathway between GlcNAc-PI synthesis and GPI transfer to protein. The sequence is that of Glycosylphosphatidylinositol anchor biosynthesis protein 11 (GPI11) from Debaryomyces hansenii (strain ATCC 36239 / CBS 767 / BCRC 21394 / JCM 1990 / NBRC 0083 / IGC 2968) (Yeast).